Consider the following 765-residue polypeptide: DNA ligase (765 aa).

The segment at Met-1 to Glu-34 is disordered. Residues Asp-61–Asp-65, Ser-110–Leu-111, and Glu-144 contribute to the NAD(+) site. Lys-146 functions as the N6-AMP-lysine intermediate in the catalytic mechanism. NAD(+) contacts are provided by Arg-167, Glu-204, Lys-317, and Lys-341. The Zn(2+) site is built by Cys-446, Cys-449, Cys-464, and Cys-470. The 79-residue stretch at Ala-687–Gly-765 folds into the BRCT domain.

This sequence belongs to the NAD-dependent DNA ligase family. LigA subfamily. Mg(2+) serves as cofactor. It depends on Mn(2+) as a cofactor.

It carries out the reaction NAD(+) + (deoxyribonucleotide)n-3'-hydroxyl + 5'-phospho-(deoxyribonucleotide)m = (deoxyribonucleotide)n+m + AMP + beta-nicotinamide D-nucleotide.. Its function is as follows. DNA ligase that catalyzes the formation of phosphodiester linkages between 5'-phosphoryl and 3'-hydroxyl groups in double-stranded DNA using NAD as a coenzyme and as the energy source for the reaction. It is essential for DNA replication and repair of damaged DNA. This Paracoccus denitrificans (strain Pd 1222) protein is DNA ligase.